Here is a 356-residue protein sequence, read N- to C-terminus: Protein HEXIM1 (356 aa).

Composition is skewed to basic and acidic residues over residues 1–11 and 24–47; these read MAEPLLSEHQH and VHEE…DSRW. Residues 1–160 are disordered; sequence MAEPLLSEHQ…RRRPSKKKRH (160 aa). The span at 48 to 58 shows a compositional bias: polar residues; it reads QSRASLQSGSR. The segment covering 84 to 93 has biased composition (basic and acidic residues); it reads CLEKGEKGQN. Ser-98 and Ser-103 each carry phosphoserine. The span at 145–160 shows a compositional bias: basic residues; that stretch reads LGKKKHRRRPSKKKRH. The tract at residues 147–174 is basic region; mediates nuclear localization and interaction with 7SK snRNA and NR3C1; the sequence is KKKHRRRPSKKKRHWKPYYKLTWEEKKK. The tract at residues 199–202 is interaction with P-TEFb; the sequence is PYNT. The interval 207 to 247 is autoinhibitory acidic region; in absence of 7SK snRNA interacts with the basic region preventing interaction with P-TEFb and modulating subcellular localization; that stretch reads MDDHDQEEPDLKTGLYPKRAAAKSDDTSDEDFVEEAGEEDG. A disordered region spans residues 209–259; the sequence is DHDQEEPDLKTGLYPKRAAAKSDDTSDEDFVEEAGEEDGGSDGMGGDGSEF. The residue at position 230 (Ser-230) is a Phosphoserine. Thr-233 carries the post-translational modification Phosphothreonine. The span at 233-248 shows a compositional bias: acidic residues; that stretch reads TSDEDFVEEAGEEDGG. Phosphoserine is present on residues Ser-234, Ser-249, and Ser-257. Positions 280 to 346 form a coiled coil; it reads SKQELIKEYL…LTENELHRQQ (67 aa). The tract at residues 283–311 is mediates interaction with CCNT1; it reads ELIKEYLELEKCLSRKEDENNRLRLESKR. Residues 307–352 are required for inhibition of ESR1-dependent transcription; sequence LESKRLGGVDARVRELELELDRLRAENRQLLTENELHRQQERAPPS. The segment at 337–356 is disordered; sequence LTENELHRQQERAPPSKFGD.

The protein belongs to the HEXIM family. In terms of assembly, homooligomer and heterooligomer with HEXIM2; probably dimeric. Core component of the 7SK RNP complex, at least composed of 7SK RNA, LARP7, MEPCE, HEXIM1 (or HEXIM2) and P-TEFb (composed of CDK9 and CCNT1/cyclin-T1). Interacts with the N-CoR complex through NCOR1. Interacts with ESR1 and NR3C1. May interact with NF-kappa-B through RELA. Interacts with CCNT2; mediates formation of a tripartite complex with KPNA2. Part of the HDP-RNP complex composed of at least HEXIM1, PRKDC, XRCC5, XRCC6, paraspeckle proteins (SFPQ, NONO, PSPC1, RBM14, and MATR3) and NEAT1 non-coding RNA.

The protein localises to the nucleus. The protein resides in the cytoplasm. Transcriptional regulator which functions as a general RNA polymerase II transcription inhibitor. Core component of the 7SK RNP complex: in cooperation with 7SK snRNA sequesters P-TEFb in a large inactive 7SK snRNP complex preventing RNA polymerase II phosphorylation and subsequent transcriptional elongation. May also regulate NF-kappa-B, ESR1, NR3C1 and CIITA-dependent transcriptional activity. Plays a role in the regulation of DNA virus-mediated innate immune response by assembling into the HDP-RNP complex, a complex that serves as a platform for IRF3 phosphorylation and subsequent innate immune response activation through the cGAS-STING pathway. This chain is Protein HEXIM1 (Hexim1), found in Rattus norvegicus (Rat).